The following is a 33-amino-acid chain: Potassium channel toxin alpha-KTx 24.1 (33 aa).

Cystine bridges form between Cys-4–Cys-23, Cys-9–Cys-28, Cys-13–Cys-30, and Cys-18–Cys-33.

Belongs to the short scorpion toxin superfamily. Potassium channel inhibitor family. Alpha-KTx 24 subfamily. In terms of processing, contains 4 disulfide bonds. As to expression, expressed by the venom gland.

Its subcellular location is the secreted. Reversibly blocks voltage-gated potassium channels Kv1.2/KCNA2, Kv1.3/KCNA3 and, weakly, Shaker B. The polypeptide is Potassium channel toxin alpha-KTx 24.1 (Pandinus imperator (Emperor scorpion)).